Here is a 494-residue protein sequence, read N- to C-terminus: Ribose import ATP-binding protein RbsA (494 aa).

ABC transporter domains are found at residues Ile-3–Ser-240 and Ser-250–Glu-494. Gly-35–Ser-42 contacts ATP.

It belongs to the ABC transporter superfamily. Ribose importer (TC 3.A.1.2.1) family. As to quaternary structure, the complex is composed of an ATP-binding protein (RbsA), two transmembrane proteins (RbsC) and a solute-binding protein (RbsB).

It is found in the cell membrane. The catalysed reaction is D-ribose(out) + ATP + H2O = D-ribose(in) + ADP + phosphate + H(+). Functionally, part of the ABC transporter complex RbsABC involved in ribose import. Responsible for energy coupling to the transport system. In Bacillus cereus (strain ZK / E33L), this protein is Ribose import ATP-binding protein RbsA.